Reading from the N-terminus, the 234-residue chain is Leucyl/phenylalanyl-tRNA--protein transferase (234 aa).

Belongs to the L/F-transferase family.

It localises to the cytoplasm. It carries out the reaction N-terminal L-lysyl-[protein] + L-leucyl-tRNA(Leu) = N-terminal L-leucyl-L-lysyl-[protein] + tRNA(Leu) + H(+). The enzyme catalyses N-terminal L-arginyl-[protein] + L-leucyl-tRNA(Leu) = N-terminal L-leucyl-L-arginyl-[protein] + tRNA(Leu) + H(+). The catalysed reaction is L-phenylalanyl-tRNA(Phe) + an N-terminal L-alpha-aminoacyl-[protein] = an N-terminal L-phenylalanyl-L-alpha-aminoacyl-[protein] + tRNA(Phe). Functions in the N-end rule pathway of protein degradation where it conjugates Leu, Phe and, less efficiently, Met from aminoacyl-tRNAs to the N-termini of proteins containing an N-terminal arginine or lysine. The polypeptide is Leucyl/phenylalanyl-tRNA--protein transferase (Salmonella gallinarum (strain 287/91 / NCTC 13346)).